A 2663-amino-acid polypeptide reads, in one-letter code: Ankyrin repeat domain-containing protein 11 (2663 aa).

2 disordered regions span residues 1–90 (MPKG…KEPV) and 128–169 (SANS…ERGE). Basic and acidic residues-rich tracts occupy residues 21–54 (MVEKQTGKKDKDKVSLTKTPKLERGDGGKEVRER) and 69–90 (EQKDSDTEKQGPERKRIKKEPV). Positions 128 to 155 (SANSPVDTTPKHPSQSTVCQKGTPNSAS) are enriched in polar residues. Residues 156-169 (KTKDKVNKRNERGE) show a composition bias toward basic and acidic residues. 4 ANK repeats span residues 167-196 (RGETRLHRAAIRGDARRIKELISEGADVNV), 200-229 (AGWTALHEACNRGYYDVAKQLLAAGAEVNT), 233-262 (DDDTPLHDAANNGHYKVVKLLLRYGGNPQQ), and 266-292 (KGETPLKVANSPTMVNLLLGKGTYTSS). S276 is subject to Phosphoserine. Disordered regions lie at residues 289–380 (YTSS…SNSF), 398–647 (APKK…GQCS), and 723–783 (DTNK…NDLK). Residues 295-305 (SSTESSEEEDA) are compositionally biased toward acidic residues. Polar residues predominate over residues 309–320 (APSSSVDGNNTD). Positions 356–376 (DRVPPVDDKHLLKKDYRKETK) are enriched in basic and acidic residues. A Phosphoserine modification is found at S408. Position 410 is a phosphothreonine (T410). A Phosphoserine modification is found at S411. The span at 438 to 451 (KTREPSNAKQQKEK) shows a compositional bias: basic and acidic residues. Residues 452–462 (NKVKKKRKKET) show a composition bias toward basic residues. The segment covering 463–477 (KGREVRFGKRSDKFC) has biased composition (basic and acidic residues). Positions 481–493 (SESESSESGEDDR) are enriched in acidic residues. Low complexity predominate over residues 513–531 (SLFSSLSASSTSSHGSSAA). Residues 539–550 (TDQHTKHWRTDN) are compositionally biased toward basic and acidic residues. Positions 551 to 562 (WKTISSPAWSEV) are enriched in polar residues. Over residues 576–588 (ESDYSSEGSSVES) the composition is skewed to low complexity. Basic residues-rich tracts occupy residues 591–602 (PVRKRQEHRKRA) and 629–641 (VKKHKTKHKHKNK). Residue S834 is modified to Phosphoserine. Composition is skewed to basic and acidic residues over residues 881 to 928 (VKED…EKHK), 935 to 1043 (SEKD…KSIL), 1059 to 1090 (KKDTKEKHKDTHGKDKERKASLDQGKEKKEKA), and 1099 to 1112 (FSEKKDDKKGKEKS). Disordered regions lie at residues 881 to 1043 (VKED…KSIL) and 1059 to 1393 (KKDT…GQYE). S1079 bears the Phosphoserine mark. Phosphothreonine is present on T1120. Residue S1123 is modified to Phosphoserine. Composition is skewed to basic and acidic residues over residues 1142-1301 (DLPR…DKIS), 1330-1347 (GDDKPRESACLPEKLKEK), and 1359-1393 (KSHDRERAKKEKAEKKEKGEDYKEGGSRKDSGQYE). T1419 is modified (phosphothreonine). 5 stretches are compositionally biased toward basic and acidic residues: residues 1424–1446 (STEKKDKNDSEREPSKKIEKELK), 1466–1545 (REKW…KGDP), 1556–1574 (APSKDPGKKDARPREKLLG), 1587–1597 (LSQKDLEIEER), and 1605–1639 (MKQMEKLRHRSGDPKLKEKAKPADDGRKKGLDIPA). The tract at residues 1424–1710 (STEKKDKNDS…TGVPTPTSVL (287 aa)) is disordered. At S1509 the chain carries Phosphoserine. Residue S1692 is modified to Phosphoserine. A compositionally biased stretch (polar residues) spans 1698–1710 (SRPTGVPTPTSVL). A Phosphoserine modification is found at S1792. The disordered stretch occupies residues 1814–1836 (SVPAASSYDSPMPPSMEDRAPLP). S1847 is subject to Phosphoserine. Y1850 and Y1851 each carry phosphotyrosine. Phosphoserine occurs at positions 1852, 1859, and 1990. Disordered stretches follow at residues 1988 to 2019 (PESPKRFCPADPLHSAAPGPFSASEAPYPAPP) and 2131 to 2406 (LDLG…STQQ). Composition is skewed to low complexity over residues 2310-2324 (IQPEAAEPKPTAEAP) and 2391-2406 (RSTQQLQQQLNTSTQQ). Residues 2369–2663 (AKARGSEDDD…VNDDFVLLPA (295 aa)) are important for protein degradation.

In terms of assembly, interacts with the PAS region of the p160 coactivators. In terms of processing, subject to proteasomal degradation which is probably essential to regulate its activity.

The protein localises to the nucleus. Functionally, chromatin regulator which modulates histone acetylation and gene expression in neural precursor cells. May recruit histone deacetylases (HDACs) to the p160 coactivators/nuclear receptor complex to inhibit ligand-dependent transactivation. Has a role in proliferation and development of cortical neural precursors. May also regulate bone homeostasis. The chain is Ankyrin repeat domain-containing protein 11 (ANKRD11) from Homo sapiens (Human).